Reading from the N-terminus, the 291-residue chain is Proteasome subunit beta (291 aa).

Residues 1–56 (MTRSFPDRLPTNLAFPGISVINQSSFVDLLRRQAPELLPVSLGGGQSGGGQQLSHG) constitute a propeptide, removed in mature form; by autocatalysis. Thr57 serves as the catalytic Nucleophile.

This sequence belongs to the peptidase T1B family. As to quaternary structure, the 20S proteasome core is composed of 14 alpha and 14 beta subunits that assemble into four stacked heptameric rings, resulting in a barrel-shaped structure. The two inner rings, each composed of seven catalytic beta subunits, are sandwiched by two outer rings, each composed of seven alpha subunits. The catalytic chamber with the active sites is on the inside of the barrel. Has a gated structure, the ends of the cylinder being occluded by the N-termini of the alpha-subunits. Is capped by the proteasome-associated ATPase, ARC.

It is found in the cytoplasm. The enzyme catalyses Cleavage of peptide bonds with very broad specificity.. It functions in the pathway protein degradation; proteasomal Pup-dependent pathway. Its activity is regulated as follows. The formation of the proteasomal ATPase ARC-20S proteasome complex, likely via the docking of the C-termini of ARC into the intersubunit pockets in the alpha-rings, may trigger opening of the gate for substrate entry. Interconversion between the open-gate and close-gate conformations leads to a dynamic regulation of the 20S proteasome proteolysis activity. In terms of biological role, component of the proteasome core, a large protease complex with broad specificity involved in protein degradation. This Mycobacterium leprae (strain Br4923) protein is Proteasome subunit beta.